The sequence spans 157 residues: XylDLEGF operon transcriptional activator 2 (157 aa).

The HTH araC/xylS-type domain occupies 39–140; the sequence is ERVVQFIEEN…GELPSDTLSL (102 aa). 2 consecutive DNA-binding regions (H-T-H motif) follow at residues 56–77 and 107–130; these read EQLAELALMSPRSLYTMFEKHT and ITEVALDYGFLHLGRFAEKYRSTF.

Its subcellular location is the cytoplasm. Its function is as follows. Regulatory protein of the TOL plasmid xyl operons. XylS activates the xylXYZLTEGFJQKIH operon required for the degradation of toluene, m-xylene and p-xylene. The chain is XylDLEGF operon transcriptional activator 2 (xylS2) from Pseudomonas putida (Arthrobacter siderocapsulatus).